We begin with the raw amino-acid sequence, 170 residues long: Large ribosomal subunit protein uL10 (170 aa).

This sequence belongs to the universal ribosomal protein uL10 family. As to quaternary structure, part of the ribosomal stalk of the 50S ribosomal subunit. The N-terminus interacts with L11 and the large rRNA to form the base of the stalk. The C-terminus forms an elongated spine to which L12 dimers bind in a sequential fashion forming a multimeric L10(L12)X complex.

Its function is as follows. Forms part of the ribosomal stalk, playing a central role in the interaction of the ribosome with GTP-bound translation factors. The sequence is that of Large ribosomal subunit protein uL10 from Jannaschia sp. (strain CCS1).